The sequence spans 223 residues: Cytidine deaminase 3 (223 aa).

CMP/dCMP-type deaminase domains follow at residues 21–154 and 184–223; these read TEPM…FSPD and SDCS…WYRG. 62-64 is a substrate binding site; sequence NVE. Zn(2+) is bound at residue His-75. Glu-77 (proton donor) is an active-site residue. Zn(2+) is bound by residues Cys-110 and Cys-113.

The protein belongs to the cytidine and deoxycytidylate deaminase family. As to quaternary structure, homodimer. It depends on Zn(2+) as a cofactor.

It catalyses the reaction cytidine + H2O + H(+) = uridine + NH4(+). The catalysed reaction is 2'-deoxycytidine + H2O + H(+) = 2'-deoxyuridine + NH4(+). In terms of biological role, this enzyme scavenges exogenous and endogenous cytidine and 2'-deoxycytidine for UMP synthesis. In Arabidopsis thaliana (Mouse-ear cress), this protein is Cytidine deaminase 3 (CDA3).